The following is a 482-amino-acid chain: Phenylalanine--tRNA ligase alpha subunit (482 aa).

L-phenylalanine contacts are provided by residues T327, 366–368 (QIE), and Y406. E408 is a binding site for Mg(2+). F430 is a binding site for L-phenylalanine.

This sequence belongs to the class-II aminoacyl-tRNA synthetase family. Phe-tRNA synthetase alpha subunit type 2 subfamily. As to quaternary structure, tetramer of two alpha and two beta subunits. It depends on Mg(2+) as a cofactor.

The protein localises to the cytoplasm. The catalysed reaction is tRNA(Phe) + L-phenylalanine + ATP = L-phenylalanyl-tRNA(Phe) + AMP + diphosphate + H(+). The sequence is that of Phenylalanine--tRNA ligase alpha subunit from Thermoplasma volcanium (strain ATCC 51530 / DSM 4299 / JCM 9571 / NBRC 15438 / GSS1).